The sequence spans 372 residues: Tribbles homolog 1 (372 aa).

Disordered regions lie at residues 1–26 (MRVGPVRFALSGASQPRGPGLLFPAA) and 49–85 (RLSECSSPPDYLSPPGSPCSPQPPPSTQGTGGSCVSS). The span at 59 to 74 (YLSPPGSPCSPQPPPS) shows a compositional bias: pro residues. The 248-residue stretch at 91-338 (IADYLLLPLA…APQILLHPWF (248 aa)) folds into the Protein kinase domain. The COP1-binding signature appears at 355 to 360 (DQIVPE).

Belongs to the protein kinase superfamily. CAMK Ser/Thr protein kinase family. Tribbles subfamily. In terms of assembly, monomer. Interacts (via protein kinase domain) with CEBPA. Interacts with COP1.

Functionally, adapter protein involved in protein degradation by interacting with COP1 ubiquitin ligase. Promotes CEBPA degradation and inhibits its function. Controls macrophage, eosinophil and neutrophil differentiation via the COP1-binding domain. Regulates myeloid cell differentiation by altering the expression of CEBPA in a COP1-dependent manner. Interacts with MAPK kinases and regulates activation of MAP kinases, but has no kinase activity. In Mus musculus (Mouse), this protein is Tribbles homolog 1.